The sequence spans 214 residues: Peroxiredoxin 2 (214 aa).

In terms of domain architecture, Thioredoxin spans 1-157; the sequence is MKLYQKFPET…LLRITKAMIV (157 aa). C45 (cysteine sulfenic acid (-SOH) intermediate) is an active-site residue. R120 serves as a coordination point for substrate.

This sequence belongs to the peroxiredoxin family. Prx6 subfamily. Homodecamer. Pentamer of dimers that assemble into a ring structure.

The protein resides in the cytoplasm. It carries out the reaction a hydroperoxide + [thioredoxin]-dithiol = an alcohol + [thioredoxin]-disulfide + H2O. Its function is as follows. Thiol-specific peroxidase that catalyzes the reduction of hydrogen peroxide and organic hydroperoxides to water and alcohols, respectively. Plays a role in cell protection against oxidative stress by detoxifying peroxides. The sequence is that of Peroxiredoxin 2 from Sulfuracidifex metallicus (Sulfolobus metallicus).